We begin with the raw amino-acid sequence, 327 residues long: Aldo-keto reductase family 7 member A3 (327 aa).

At Ser-2 the chain carries Phosphoserine. Residues Met-13, Arg-18, and Asp-40 each contribute to the NADP(+) site. Tyr-45 (proton donor) is an active-site residue. Residue His-109 participates in citrate binding. 6 residues coordinate NADP(+): Asn-140, Asn-194, Leu-196, Gly-198, Arg-204, and Arg-218. The citrate site is built by Tyr-228 and Arg-231. Ser-286, Gln-290, Gln-293, Asn-294, and Arg-327 together coordinate NADP(+).

It belongs to the aldo/keto reductase family. Aldo/keto reductase 2 subfamily. Homodimer. Heterodimer with AKR7A2.

The protein resides in the cytoplasm. It carries out the reaction a primary alcohol + NADP(+) = an aldehyde + NADPH + H(+). The catalysed reaction is aflatoxin B1 dialdehyde + NADPH + H(+) = aflatoxin B1 C(6a)-monoaldehyde + NADP(+). The enzyme catalyses aflatoxin B1 dialdehyde + NADPH + H(+) = aflatoxin B1 C(8)-monoaldehyde + NADP(+). It catalyses the reaction aflatoxin B1 C(6a)-monoaldehyde + NADPH + 2 H(+) = aflatoxin B1 triol + NADP(+). With respect to regulation, inhibited by citrate. Functionally, catalyzes the NADPH-dependent reduction of various carbonyl-containing compounds, including aldehydes, ketones, and toxic products from cellular metabolism or environmental exposure. Can reduce the dialdehyde form of aflatoxin B1 (AFB1) into alcohol derivatives, via monoaldehydes intermediates, thus preventing the formation of protein adducts that contribute to AFB1-induced toxicity. The polypeptide is Aldo-keto reductase family 7 member A3 (Rattus norvegicus (Rat)).